We begin with the raw amino-acid sequence, 96 residues long: MNITDVRIRRVDNKNPGSKLLAYVTVTFDDCLVLHNIRVIRGQKGVFIVMPNRRTKVGEYKDIVHPINQSFREILQSAIFKEYVKENPSSLELEIG.

The protein belongs to the SpoVG family.

Functionally, could be involved in septation. The chain is Putative septation protein SpoVG from Borrelia hermsii (strain HS1 / DAH).